A 98-amino-acid polypeptide reads, in one-letter code: DNA-binding protein Fis (98 aa).

The segment at residues 74–93 (QTRAALMMGINRGTLRKKLK) is a DNA-binding region (H-T-H motif).

It belongs to the transcriptional regulatory Fis family. As to quaternary structure, homodimer.

Activates ribosomal RNA transcription. Plays a direct role in upstream activation of rRNA promoters. This Enterobacter sp. (strain 638) protein is DNA-binding protein Fis.